Consider the following 387-residue polypeptide: Proline-rich protein 5 (387 aa).

Interaction with RICTOR stretches follow at residues 10-96 and 189-219; these read MSSP…LTKG and HESR…YGLY. The tract at residues 11–33 is disordered; that stretch reads SSPSLSDLGKREPGAAGADERGT. The span at 18 to 33 shows a compositional bias: basic and acidic residues; it reads LGKREPGAAGADERGT. S253 is subject to Phosphoserine. 2 disordered regions span residues 262 to 347 and 365 to 387; these read NPVA…PETL and DFGR…PSVV. Positions 310-321 are enriched in low complexity; that stretch reads SSPSPHSGPCPS. Residue S373 is modified to Phosphoserine.

Belongs to the PROTOR family. As to quaternary structure, associated component of the mechanistic target of rapamycin complex 2 (mTORC2). Binds directly to MTOR and RICTOR within the TORC2 complex.

In terms of biological role, associated subunit of mTORC2, which regulates cell growth and survival in response to hormonal signals. mTORC2 is activated by growth factors, but, in contrast to mTORC1, seems to be nutrient-insensitive. mTORC2 seems to function upstream of Rho GTPases to regulate the actin cytoskeleton, probably by activating one or more Rho-type guanine nucleotide exchange factors. PRR5 plays an important role in regulation of PDGFRB expression and in modulation of platelet-derived growth factor signaling. May act as a tumor suppressor in breast cancer. The sequence is that of Proline-rich protein 5 from Rattus norvegicus (Rat).